Consider the following 432-residue polypeptide: MNLIESARAGLITPEMEQVAVQEGVTPEFVRQGVADGTIVILRNARRQNVTPVGVGKGLRTKVSASVGLYGETGGIDVEVAKIKAAVEAGTDAIMDLSVSGDIEAMLAETLAVSPKPVGTLPLYQAMAEAGRKYGSSVNMRDEDLFDVIERHAAAGVDFLALHCGTTMNIVERARNEGRIDPLVSYGGSHLIGWMLANRRENPLYEHFDRVLAIARKYDVTISFADGMRPGCLADSLDGPQVEELVVLGELVRRAREAGVQVMVKGPGHVPLQQLKATVVLEKSLCHGAPYFVFGPLVTDIAIGYDHINAAIGGALSAWAGAEFLCYVTAAEHVGIPDIDQVREGVIAARIAAHAADLANGLTCAREWDRELSRARKELDWKRQIALAIDPERAGRLREERSDAAAAGCAMCGKYCAMEIVSRYLGTARHTC.

Residues Met-95, Tyr-124, His-163, 185 to 187 (SYG), and 226 to 229 (DGMR) contribute to the substrate site. Residue His-269 coordinates Zn(2+). Substrate is bound at residue Phe-292. His-333 provides a ligand contact to Zn(2+). The [4Fe-4S] cluster site is built by Cys-409, Cys-412, and Cys-416.

This sequence belongs to the ThiC family. 5-hydroxybenzimidazole synthase subfamily. [4Fe-4S] cluster serves as cofactor.

The enzyme catalyses 5-amino-1-(5-phospho-beta-D-ribosyl)imidazole + AH2 + S-adenosyl-L-methionine = 5-hydroxybenzimidazole + 5'-deoxyadenosine + formate + L-methionine + A + NH4(+) + phosphate + 2 H(+). In terms of biological role, together with BzaB, probably catalyzes the conversion of aminoimidazole ribotide (AIR) to 5-hydroxybenzimidazole (5-HBI) in a radical S-adenosyl-L-methionine (SAM)-dependent reaction. Is thus involved in the anaerobic biosynthesis of the benzimidazole lower axial ligand of the cobamide produced by M.thermoacetica. Requires BzaB for catalytic activity, as BzaA alone displays no activity. This chain is 5-hydroxybenzimidazole synthase BzaA, found in Moorella thermoacetica (strain ATCC 39073 / JCM 9320).